Here is a 176-residue protein sequence, read N- to C-terminus: Oleosin Ara h 14.0102 (176 aa).

N-acetylalanine; alternate is present on Ala-2. 2 helical membrane passes run Gly-61–Ala-81 and Phe-87–Leu-107. Residues Lys-156–Ser-176 are disordered.

It belongs to the oleosin family. As to quaternary structure, homodimer. Forms oligomers. In terms of tissue distribution, expressed in seeds (at protein level). Not expressed in leaves.

Its subcellular location is the lipid droplet. It is found in the membrane. Its function is as follows. May have a structural role to stabilize the lipid body during desiccation of the seed by preventing coalescence of the oil. Probably interacts with both lipid and phospholipid moieties of lipid bodies. May also provide recognition signals for specific lipase anchorage in lipolysis during seedling growth. The protein is Oleosin Ara h 14.0102 of Arachis hypogaea (Peanut).